Consider the following 562-residue polypeptide: MTRNSRPNIVLLMADDLGVGDLCCYGNNTVSTPNIDRLASEGVRLTQHLAAASVCTPSRAAFLTGRYPIRSGMASPYNLNRGLTWLGGSGGLPTNETTFAKLLQHYGYRTGLIGKWHQGLSCASRNDHCYHPLNHGFDYFYGLPFGLLSDCQASRTPELHRWLRIKLWISTAVLSLVPLLLLIPKYARWFVVPWKVILTFALLAFLFFISWYSSYGFTRRWNCILMRNHEIIQQPMREERVASLMLKEALAFIDRYKRGPFLLFVSFLHVHTPLITKDKFVGHSKYGLYGDNVEEMDWMVGKILETLDQERLTNHTLVYFTSDNGGRLEVQEGEVQLGGSNGIYKGGQGMGGWEGGIRVPGIFRWPTVLQAGKVINEPTSLMDIYPTLSYIGGGMLPQDRVIDGRNLMPLLEGRVSHSDHEFLFHYCGVYLHTARWHQKDCATVWKAHYVTPKFSPDGAGACYGSGICPCSGDVTYHDPPLLFDVSRDPSETRPLNPDNEALFDSVVKKIEAAIKEHRRTLTPVPQQFSVFNTLWKPWLQPCCGTFPFCGCDKEDDILSTAW.

Aspartate 15, aspartate 16, and cysteine 55 together coordinate Ca(2+). Cysteine 55 (nucleophile) is an active-site residue. Cysteine 55 is modified (3-oxoalanine (Cys)). Position 115 (lysine 115) interacts with substrate. Histidine 117 is a catalytic residue. The next 2 membrane-spanning stretches (helical) occupy residues 167–187 (LWIS…PKYA) and 189–209 (WFVV…LFFI). Histidine 271 provides a ligand contact to substrate. Ca(2+)-binding residues include aspartate 323 and asparagine 324.

It belongs to the sulfatase family. Ca(2+) is required as a cofactor. Post-translationally, the conversion to 3-oxoalanine (also known as C-formylglycine, FGly), of a serine or cysteine residue in prokaryotes and of a cysteine residue in eukaryotes, is critical for catalytic activity.

It is found in the membrane. The protein is Arylsulfatase H (ARSH) of Canis lupus familiaris (Dog).